We begin with the raw amino-acid sequence, 229 residues long: Protein-L-isoaspartate O-methyltransferase (229 aa).

Serine 74 is a catalytic residue.

The protein belongs to the methyltransferase superfamily. L-isoaspartyl/D-aspartyl protein methyltransferase family.

The protein localises to the cytoplasm. It carries out the reaction [protein]-L-isoaspartate + S-adenosyl-L-methionine = [protein]-L-isoaspartate alpha-methyl ester + S-adenosyl-L-homocysteine. Catalyzes the methyl esterification of L-isoaspartyl residues in peptides and proteins that result from spontaneous decomposition of normal L-aspartyl and L-asparaginyl residues. It plays a role in the repair and/or degradation of damaged proteins. This Pelotomaculum thermopropionicum (strain DSM 13744 / JCM 10971 / SI) protein is Protein-L-isoaspartate O-methyltransferase.